The following is a 382-amino-acid chain: GDP-mannose transporter (382 aa).

Residues 1-40 (MADDKKTNEYTIEMDKLDHGNKDFEAPAPAVRPRGPPVAQ) are Cytoplasmic-facing. The chain crosses the membrane as a helical span at residues 41–61 (LANNPILPVLAYCGSSILMTV). Residues 62-71 (MNKYVLSGRD) are Lumenal-facing. The helical transmembrane segment at 72–92 (FNLNFFLLCVQSIVCIVAIQT) threads the bilayer. The Cytoplasmic portion of the chain corresponds to 93–110 (CKVSKLITYRDFNSDEAK). A helical transmembrane segment spans residues 111 to 127 (KWFPITLLLIGMIYTGS). Topologically, residues 128-134 (KALQYLS) are lumenal. The chain crosses the membrane as a helical span at residues 135 to 151 (IPVYTIFKNLTIILIAY). At 152-160 (GEVLWFGGS) the chain is on the cytoplasmic side. A helical membrane pass occupies residues 161 to 182 (VTGLTLFSFGLMVLSSIIAAWA). The Lumenal segment spans residues 183–200 (DIKHAVESSGDATAKVST). The chain crosses the membrane as a helical span at residues 201–221 (LNAGYIWMLINCLCTSSYVLG). Residues 222–233 (MRKRIKLTNFKD) are Cytoplasmic-facing. The helical transmembrane segment at 234–254 (FDTMFYNNLLSIPVLLVLTFL) threads the bilayer. Over 255-274 (MEDWSSANIARNFPSTDRNG) the chain is Lumenal. The chain crosses the membrane as a helical span at residues 275–295 (ILFAMILSGLSSVFISYTSAW). At 296–303 (CVRVTSST) the chain is on the cytoplasmic side. Residues 304 to 324 (TYSMVGALNKLPIALSGLIFF) traverse the membrane as a helical segment. Over 325 to 327 (DAP) the chain is Lumenal. The chain crosses the membrane as a helical span at residues 328-348 (VTFPSVSAIVVGFISGIVYAV). Residues 349–382 (AKIKQSAKPKTGVLPMSNPPVSASSQSMRDSLRS) lie on the Cytoplasmic side of the membrane. Residues 358–382 (KTGVLPMSNPPVSASSQSMRDSLRS) form a disordered region. Over residues 367–382 (PPVSASSQSMRDSLRS) the composition is skewed to polar residues.

This sequence belongs to the TPT transporter family. SLC35D subfamily. In terms of assembly, homooligomer.

It localises to the golgi apparatus membrane. The protein resides in the cytoplasmic vesicle membrane. It is found in the endoplasmic reticulum membrane. Functionally, involved in the import of GDP-mannose from the cytoplasm into the Golgi lumen. The polypeptide is GDP-mannose transporter (gmt1) (Aspergillus fumigatus (strain CBS 144.89 / FGSC A1163 / CEA10) (Neosartorya fumigata)).